Consider the following 1026-residue polypeptide: Unconventional myosin-Ic (1026 aa).

Met1 carries the N-acetylmethionine modification. The Myosin motor domain maps to 12–695 (GVQDFLLLEN…TLFITEDALE (684 aa)). ATP-binding positions include Asn53, Tyr61, 104–113 (SGESGAGKTE), and 157–161 (NDNSS). Residue Lys349 is modified to N6-methyllysine. Residues 572–594 (LAKLMDILMSKEPSYVRCIKPND) form an actin-binding region. 2 IQ domains span residues 698 to 727 (KQTI…AVIV) and 721 to 750 (IRHA…AADT). Residues 849 to 1024 (KDGYSRSVPK…NGHLSVTTPR (176 aa)) enclose the TH1 domain.

The protein belongs to the TRAFAC class myosin-kinesin ATPase superfamily. Myosin family. Interacts (via its IQ motifs) with calm.

It is found in the cytoplasm. Its subcellular location is the cell cortex. The protein resides in the cell projection. It localises to the ruffle membrane. The protein localises to the cytoplasmic vesicle. It is found in the stereocilium membrane. Functionally, myosins are actin-based motor molecules with ATPase activity. Unconventional myosins serve in intracellular movements. Their highly divergent tails are presumed to bind to membranous compartments, which would be moved relative to actin filaments. The protein is Unconventional myosin-Ic (myo1c) of Danio rerio (Zebrafish).